Reading from the N-terminus, the 208-residue chain is Recombination protein RecR (208 aa).

Residues 57-72 (CALCNTLTEQEVCVTC) form a C4-type zinc finger. The 108-residue stretch at 80–187 (SKLCVVETPA…QVTRLARGVP (108 aa)) folds into the Toprim domain.

It belongs to the RecR family.

Its function is as follows. May play a role in DNA repair. It seems to be involved in an RecBC-independent recombinational process of DNA repair. It may act with RecF and RecO. The sequence is that of Recombination protein RecR from Polaromonas naphthalenivorans (strain CJ2).